Consider the following 521-residue polypeptide: Glucose-1-phosphate adenylyltransferase small subunit, chloroplastic (521 aa).

The tract at residues Met1–Asp24 is disordered. The transit peptide at Met1 to Ala72 directs the protein to the chloroplast.

It belongs to the bacterial/plant glucose-1-phosphate adenylyltransferase family. Heterotetramer.

Its subcellular location is the plastid. The protein localises to the chloroplast. The enzyme catalyses alpha-D-glucose 1-phosphate + ATP + H(+) = ADP-alpha-D-glucose + diphosphate. Its pathway is glycan biosynthesis; starch biosynthesis. Activated by 3'phosphoglycerate, inhibited by orthophosphate. Allosteric regulation. Functionally, this protein plays a role in synthesis of starch. It catalyzes the synthesis of the activated glycosyl donor, ADP-glucose from Glc-1-P and ATP. The protein is Glucose-1-phosphate adenylyltransferase small subunit, chloroplastic of Solanum lycopersicum (Tomato).